Reading from the N-terminus, the 120-residue chain is MTDPAGADERFLGAHRLHKTDEFSSVFAFRRALRGRYFMLHYRPNALTTARLGVVVAKKLAKRANVRNLVKRIARERFRRQRTVLPAHDLIVRLHAPVTEASRAALNQDLLQLFGRLPQT.

This sequence belongs to the RnpA family. In terms of assembly, consists of a catalytic RNA component (M1 or rnpB) and a protein subunit.

It carries out the reaction Endonucleolytic cleavage of RNA, removing 5'-extranucleotides from tRNA precursor.. In terms of biological role, RNaseP catalyzes the removal of the 5'-leader sequence from pre-tRNA to produce the mature 5'-terminus. It can also cleave other RNA substrates such as 4.5S RNA. The protein component plays an auxiliary but essential role in vivo by binding to the 5'-leader sequence and broadening the substrate specificity of the ribozyme. The polypeptide is Ribonuclease P protein component (Azoarcus sp. (strain BH72)).